We begin with the raw amino-acid sequence, 454 residues long: Apyrase (454 aa).

At 1-7 the chain is on the cytoplasmic side; the sequence is MLNQNSH. Residues 8 to 28 traverse the membrane as a helical; Signal-anchor for type II membrane protein segment; the sequence is FIFIILAIFLVLPLSLLSKNV. Residues 29-454 lie on the Extracellular side of the membrane; it reads NAQIPLRRHL…TTNKIRVASS (426 aa). 48 to 58 contacts ATP; that stretch reads VIFDAGSTGSR. Asn-151 carries N-linked (GlcNAc...) asparagine glycosylation. Catalysis depends on Glu-170, which acts as the Proton acceptor. An ATP-binding site is contributed by 194 to 204; it reads ATIDLGGGSVQ. The N-linked (GlcNAc...) asparagine glycan is linked to Asn-262.

Belongs to the GDA1/CD39 NTPase family. Ca(2+) serves as cofactor. The N-terminus is blocked.

It is found in the membrane. It carries out the reaction a ribonucleoside 5'-triphosphate + 2 H2O = a ribonucleoside 5'-phosphate + 2 phosphate + 2 H(+). Functionally, catalyzes the hydrolysis of phosphoanhydride bonds of nucleoside tri- and di-phosphates. The sequence is that of Apyrase (RROP1) from Solanum tuberosum (Potato).